The sequence spans 277 residues: Large ribosomal subunit protein uL2 (277 aa).

Disordered regions lie at residues methionine 1–aspartate 20 and glycine 210–lysine 277. Residues glycine 210 to glutamine 221 show a composition bias toward basic residues.

The protein belongs to the universal ribosomal protein uL2 family. Part of the 50S ribosomal subunit. Forms a bridge to the 30S subunit in the 70S ribosome.

In terms of biological role, one of the primary rRNA binding proteins. Required for association of the 30S and 50S subunits to form the 70S ribosome, for tRNA binding and peptide bond formation. It has been suggested to have peptidyltransferase activity; this is somewhat controversial. Makes several contacts with the 16S rRNA in the 70S ribosome. This chain is Large ribosomal subunit protein uL2, found in Deinococcus deserti (strain DSM 17065 / CIP 109153 / LMG 22923 / VCD115).